Reading from the N-terminus, the 270-residue chain is MSTNINEEKCLEGDDIKYEKPDTHKNFWKSFGLNNEAGKLLYHLYGESNKIKPNILSSKHDGDKNKNDKKKEDAKLNTTYRKPQIHYPSLKKKAVKENPIDTIKHRKPLSKILEETQNYDCIKDIPISIGMNRETEKNKLHNIFVEEKCLMVPPSCAPMILTQEEKKEIIEKAQQRYIYINEENKSREEKHIQALRNYKLELIQELNEKRKLLQDIINEDKNIQGNISINQSDKRVSNKGNSYNIIQIKNDIEQCQKSIKKIEDNLNTYE.

Disordered regions lie at residues 1–21 and 53–77; these read MSTN…YEKP and PNIL…AKLN. Over residues 58–75 the composition is skewed to basic and acidic residues; it reads SKHDGDKNKNDKKKEDAK. A coiled-coil region spans residues 182-270; that stretch reads EENKSREEKH…KIEDNLNTYE (89 aa).

This is an uncharacterized protein from Plasmodium falciparum (isolate 3D7).